The primary structure comprises 437 residues: Epsilon-sarcoglycan (437 aa).

The Extracellular segment spans residues 1 to 317 (MLLFWWWELG…LKSRDYYTDF (317 aa)). Asparagine 200 carries an N-linked (GlcNAc...) asparagine glycan. A helical transmembrane segment spans residues 318–338 (LVTLAVPSAVALVLFLILAYI). Residues 339-437 (MCCRREGVEK…QPQTTGKWYP (99 aa)) lie on the Cytoplasmic side of the membrane.

Belongs to the sarcoglycan alpha/epsilon family. N-glycosylated. Post-translationally, ubiquitinated, leading to its degradation by the proteasome. Identified in all tissues tested. Expression highest in lung and placenta, moderate in brain, heart and skeletal muscle, low in kidney and liver. Also detected in embryo.

It localises to the cell membrane. The protein resides in the sarcolemma. Its subcellular location is the golgi apparatus. The protein localises to the cell projection. It is found in the dendrite. It localises to the cytoplasm. The protein resides in the cytoskeleton. Its function is as follows. Component of the sarcoglycan complex, a subcomplex of the dystrophin-glycoprotein complex which forms a link between the F-actin cytoskeleton and the extracellular matrix. The chain is Epsilon-sarcoglycan (Sgce) from Mus musculus (Mouse).